The following is a 96-amino-acid chain: Protein YddL (96 aa).

A signal peptide spans 1-21; it reads MKLKIVAVVVTGLLAANVAHA.

The protein is Protein YddL (yddL) of Escherichia coli (strain K12).